The following is a 496-amino-acid chain: MTATALAQRDFTAVIGLEVHVQLETDTKIFCGCSTRDNNAEPNTRTCPVCLGLPGALPVLNKAAVEAAVKVGKALNADIAEKTQFHRKNYYYPDLPKNFQISQYDAPICSDGQLSISVEDNRREVAIRRAHLEEDPGSLTHQGGNIDTAEYTLVDYNRAGTPLMEIVTEPDFRSPAETRAFLNKLEEVLEYLGIFDPTADGSLRVDANISLIPTEDIDNGSITTAALESANRTEVKNISSHKGAEKALAYEVTRQRNAVERGRAIEQETRHWDESRGITVSMRSKEAEKDYRYFPEADLPPLAVADWKDQISIPELPDARRERFREEYKLDSESAAKLTSTKAVADFFESVADQFDPALAATWVADNLLGELNYRDMTVGDIDDRFDEFTQLIELVDDEDITTKNAEEVVLRRMLDDELTPEAVIESEGLGRADEDEVVTAVTGAIDESPEAVEDYHAGEGGAINFLVGQVMQKTGGSADPSKVNTLLREQLEDKK.

Positions 475 to 496 (TGGSADPSKVNTLLREQLEDKK) are disordered.

It belongs to the GatB/GatE family. GatB subfamily. In terms of assembly, heterotrimer of A, B and C subunits.

It catalyses the reaction L-glutamyl-tRNA(Gln) + L-glutamine + ATP + H2O = L-glutaminyl-tRNA(Gln) + L-glutamate + ADP + phosphate + H(+). The enzyme catalyses L-aspartyl-tRNA(Asn) + L-glutamine + ATP + H2O = L-asparaginyl-tRNA(Asn) + L-glutamate + ADP + phosphate + 2 H(+). Functionally, allows the formation of correctly charged Asn-tRNA(Asn) or Gln-tRNA(Gln) through the transamidation of misacylated Asp-tRNA(Asn) or Glu-tRNA(Gln) in organisms which lack either or both of asparaginyl-tRNA or glutaminyl-tRNA synthetases. The reaction takes place in the presence of glutamine and ATP through an activated phospho-Asp-tRNA(Asn) or phospho-Glu-tRNA(Gln). In Haloquadratum walsbyi (strain DSM 16790 / HBSQ001), this protein is Aspartyl/glutamyl-tRNA(Asn/Gln) amidotransferase subunit B.